Reading from the N-terminus, the 1448-residue chain is Murinoglobulin-2 (1448 aa).

The N-terminal stretch at 1–24 is a signal peptide; it reads MWKNREAQLCLFSVLLAFLPSASL. 3 disulfides stabilise this stretch: cysteine 48–cysteine 86, cysteine 245–cysteine 277, and cysteine 263–cysteine 289. An N-linked (GlcNAc...) asparagine glycan is attached at asparagine 55. Asparagine 295, asparagine 315, asparagine 387, and asparagine 502 each carry an N-linked (GlcNAc...) asparagine glycan. 3 disulfide bridges follow: cysteine 462-cysteine 556, cysteine 588-cysteine 748, and cysteine 636-cysteine 681. Residues 678–709 are bait region; the sequence is PTYCYDLPKEPPRKDPPRKDPEPKDTVVETIR. N-linked (GlcNAc...) asparagine glycosylation is found at asparagine 751 and asparagine 846. 4 cysteine pairs are disulfide-bonded: cysteine 824/cysteine 860, cysteine 898/cysteine 1295, cysteine 1056/cysteine 1101, and cysteine 1326/cysteine 1441. Positions 949-952 form a cross-link, isoglutamyl cysteine thioester (Cys-Gln); that stretch reads CGEQ. Asparagine 968 carries an N-linked (GlcNAc...) asparagine glycan. N-linked (GlcNAc...) asparagine glycans are attached at residues asparagine 1114, asparagine 1285, and asparagine 1398.

The protein belongs to the protease inhibitor I39 (alpha-2-macroglobulin) family. In terms of assembly, monomer.

It localises to the secreted. In terms of biological role, a proteinase activates the inhibitor by specific proteolysis in the bait region, which, by an unknown mechanism leads to reaction at the cysteinyl-glutamyl internal thiol ester site and to a conformational change, whereby the proteinase is trapped and/or covalently bound to the inhibitor. While in the tetrameric proteinase inhibitors steric inhibition is sufficiently strong, monomeric forms need a covalent linkage between the activated glutamyl residue of the original thiol ester and a terminal amino group of a lysine or another nucleophilic group on the proteinase, for inhibition to be effective. The polypeptide is Murinoglobulin-2 (Rattus norvegicus (Rat)).